A 228-amino-acid polypeptide reads, in one-letter code: MDSVKNILLEYGLRFQEPQIEKVDKYIEELLGVPYNLTAHRDLDSAVHKNVVEILLPLKEELKGTLLDVGSGNGVPGLILAIFFSKLKVVLLDSREKSVNFLRGVIEKLDLENVSVVKERAENFSKERREEFDYVTARAVARLNVLVEICTPALKTGGKLLFYKGPSYIEELKEAQRAMKELKVELEKVREYSLKTGERRALLILRKYESSPEKYPRRVGVPFKRPLL.

S-adenosyl-L-methionine-binding positions include Gly70, 121-122 (AE), and Arg138.

It belongs to the methyltransferase superfamily. RNA methyltransferase RsmG family.

It is found in the cytoplasm. Specifically methylates the N7 position of a guanine in 16S rRNA. The sequence is that of Ribosomal RNA small subunit methyltransferase G from Thermotoga petrophila (strain ATCC BAA-488 / DSM 13995 / JCM 10881 / RKU-1).